Reading from the N-terminus, the 446-residue chain is Ribosomal protein uS12 methylthiotransferase RimO (446 aa).

An MTTase N-terminal domain is found at 4–119 (LKVGLISLGC…LVENINNFIS (116 aa)). [4Fe-4S] cluster is bound by residues cysteine 13, cysteine 48, cysteine 82, cysteine 157, cysteine 161, and cysteine 164. The Radical SAM core domain maps to 143 to 373 (TTKSHTAYLR…MMLQKHIIYS (231 aa)). One can recognise a TRAM domain in the interval 376-442 (KYKIGNKYKV…EYDLVGVVYD (67 aa)).

This sequence belongs to the methylthiotransferase family. RimO subfamily. [4Fe-4S] cluster serves as cofactor.

It localises to the cytoplasm. The catalysed reaction is L-aspartate(89)-[ribosomal protein uS12]-hydrogen + (sulfur carrier)-SH + AH2 + 2 S-adenosyl-L-methionine = 3-methylsulfanyl-L-aspartate(89)-[ribosomal protein uS12]-hydrogen + (sulfur carrier)-H + 5'-deoxyadenosine + L-methionine + A + S-adenosyl-L-homocysteine + 2 H(+). Catalyzes the methylthiolation of an aspartic acid residue of ribosomal protein uS12. The chain is Ribosomal protein uS12 methylthiotransferase RimO from Clostridium kluyveri (strain ATCC 8527 / DSM 555 / NBRC 12016 / NCIMB 10680 / K1).